A 491-amino-acid chain; its full sequence is Aspartyl/glutamyl-tRNA(Asn/Gln) amidotransferase subunit B (491 aa).

It belongs to the GatB/GatE family. GatB subfamily. In terms of assembly, heterotrimer of A, B and C subunits.

It carries out the reaction L-glutamyl-tRNA(Gln) + L-glutamine + ATP + H2O = L-glutaminyl-tRNA(Gln) + L-glutamate + ADP + phosphate + H(+). The enzyme catalyses L-aspartyl-tRNA(Asn) + L-glutamine + ATP + H2O = L-asparaginyl-tRNA(Asn) + L-glutamate + ADP + phosphate + 2 H(+). In terms of biological role, allows the formation of correctly charged Asn-tRNA(Asn) or Gln-tRNA(Gln) through the transamidation of misacylated Asp-tRNA(Asn) or Glu-tRNA(Gln) in organisms which lack either or both of asparaginyl-tRNA or glutaminyl-tRNA synthetases. The reaction takes place in the presence of glutamine and ATP through an activated phospho-Asp-tRNA(Asn) or phospho-Glu-tRNA(Gln). The protein is Aspartyl/glutamyl-tRNA(Asn/Gln) amidotransferase subunit B of Paraburkholderia phytofirmans (strain DSM 17436 / LMG 22146 / PsJN) (Burkholderia phytofirmans).